A 332-amino-acid chain; its full sequence is Cytoplasmic phosphatidylinositol transfer protein 1 (332 aa).

Residues Ser119, Ser270, and Ser274 each carry the phosphoserine modification. The segment covering 267–285 (SVRSAPSSAPSTPLSTDAP) has biased composition (low complexity). Residues 267–332 (SVRSAPSSAP…SDKPCRPKSE (66 aa)) form a disordered region. A Phosphothreonine modification is found at Thr278. Basic and acidic residues predominate over residues 322–332 (SSDKPCRPKSE).

The protein belongs to the PtdIns transfer protein family. PI transfer class IIB subfamily. Ubiquitously expressed.

The protein resides in the cytoplasm. It catalyses the reaction a 1,2-diacyl-sn-glycero-3-phospho-(1D-myo-inositol)(in) = a 1,2-diacyl-sn-glycero-3-phospho-(1D-myo-inositol)(out). It carries out the reaction a 1,2-diacyl-sn-glycero-3-phosphate(in) = a 1,2-diacyl-sn-glycero-3-phosphate(out). Its function is as follows. Catalyzes the transfer of phosphatidylinositol (PI) and phosphatidic acid (PA) between membranes. Binds PA derived from the phospholipase D signaling pathway and among the cellular PA species, preferably binds to the C16:0/16:1 and C16:1/18:1 PA species. Catalyzes the transfer of phosphatidylinositol between membranes. The protein is Cytoplasmic phosphatidylinositol transfer protein 1 (PITPNC1) of Homo sapiens (Human).